The sequence spans 369 residues: RING-H2 finger protein ATL47 (369 aa).

Residues 52 to 72 traverse the membrane as a helical segment; it reads IILFIIVLLSVIFFICSILHL. The RING-type; atypical zinc-finger motif lies at 144-186; it reads CAVCLCEFSEDDKLRLLPNCSHAFHIDCIDTWLLSNSTCPLCR. The disordered stretch occupies residues 332-355; sequence NNHPSETNLVVGGSSSSSSYVCSG. Positions 341 to 355 are enriched in low complexity; it reads VVGGSSSSSSYVCSG.

It belongs to the RING-type zinc finger family. ATL subfamily.

Its subcellular location is the membrane. It catalyses the reaction S-ubiquitinyl-[E2 ubiquitin-conjugating enzyme]-L-cysteine + [acceptor protein]-L-lysine = [E2 ubiquitin-conjugating enzyme]-L-cysteine + N(6)-ubiquitinyl-[acceptor protein]-L-lysine.. The protein operates within protein modification; protein ubiquitination. The polypeptide is RING-H2 finger protein ATL47 (ATL47) (Arabidopsis thaliana (Mouse-ear cress)).